The chain runs to 378 residues: uncharacterized protein (378 aa).

Residues 208 to 317 (GIGFADLSSF…NPVNLAARLV (110 aa)) enclose the Guanylate cyclase domain.

Belongs to the adenylyl cyclase class-4/guanylyl cyclase family.

This is an uncharacterized protein from Mycobacterium bovis (strain ATCC BAA-935 / AF2122/97).